The chain runs to 515 residues: Putative acetolactate synthase large subunit IlvX (515 aa).

Glu-48 lines the thiamine diphosphate pocket. FAD contacts are provided by residues 249–269 (FAEG…AGAR) and 283–302 (DLVP…GAAD). A thiamine pyrophosphate binding region spans residues 357 to 436 (TCGVLLPQAT…VTTVIYNNGA (80 aa)). Mg(2+)-binding residues include Asp-407 and Asn-434.

This sequence belongs to the TPP enzyme family. Heterodimer of large catalytic subunit and small regulatory subunit. The cofactor is Mg(2+). Thiamine diphosphate is required as a cofactor.

The enzyme catalyses 2 pyruvate + H(+) = (2S)-2-acetolactate + CO2. The protein operates within amino-acid biosynthesis; L-isoleucine biosynthesis; L-isoleucine from 2-oxobutanoate: step 1/4. It functions in the pathway amino-acid biosynthesis; L-valine biosynthesis; L-valine from pyruvate: step 1/4. Functionally, catalyzes the conversion of 2 pyruvate molecules into acetolactate in the first common step of the biosynthetic pathway of the branched-amino acids such as leucine, isoleucine, and valine. The protein is Putative acetolactate synthase large subunit IlvX (ilvX) of Mycobacterium tuberculosis (strain ATCC 25618 / H37Rv).